Consider the following 346-residue polypeptide: fMet-Leu-Phe receptor (346 aa).

N1 and N7 each carry an N-linked (GlcNAc...) asparagine glycan. The Extracellular portion of the chain corresponds to 1 to 24 (NSSLPTNISGGTPAVSAGYLFLDI). Residues 25-47 (ITYLVFAVTFVLGVLGNGLVIWV) form a helical membrane-spanning segment. The Cytoplasmic portion of the chain corresponds to 48-58 (AGFRMRHTVTT). The helical transmembrane segment at 59–80 (ISYLNLAVADFCFTSTLPFLMV) threads the bilayer. Over 81–97 (VKVMRGHWPFGWFLCKF) the chain is Extracellular. A disulfide bridge links C95 with C173. The chain crosses the membrane as a helical span at residues 98–118 (IFTIVDINLFGSVFLIALIAL). Residues 119–137 (DRCVCVLHPVWTQNHRTVS) are Cytoplasmic-facing. The helical transmembrane segment at 138 to 159 (LAKKVIIGPWVMALLLTLPVII) threads the bilayer. Over 160 to 202 (RVTTVPGKTGTVACTFDFSPWTNDPVEKLKVTIAMLTVRGIIR) the chain is Extracellular. The helical transmembrane segment at 203 to 223 (FIIGFSVPMSIVAVSYGLIAT) threads the bilayer. At 224-239 (KIHKQGLIKSSRPLRV) the chain is on the cytoplasmic side. A helical membrane pass occupies residues 240–263 (LSFVVAAFFLCWSPYQVVAFIATV). Residues 264 to 282 (RLRNILQGLSKELRIAVDA) are Extracellular-facing. Residues 283-302 (TSALAFFNSCLNPMLYVFMG) traverse the membrane as a helical segment. Residues 303–346 (QDFRERLIHSLPTSLERALTEDSAQTSDTATNSTLPSAEVPLQA) lie on the Cytoplasmic side of the membrane. The tract at residues 321 to 346 (LTEDSAQTSDTATNSTLPSAEVPLQA) is disordered. Over residues 324 to 338 (DSAQTSDTATNSTLP) the composition is skewed to polar residues.

Belongs to the G-protein coupled receptor 1 family. Post-translationally, phosphorylated; which is necessary for desensitization.

It localises to the cell membrane. In terms of biological role, high affinity receptor for N-formyl-methionyl peptides (fMLP), which are powerful neutrophil chemotactic factors. Binding of fMLP to the receptor stimulates intracellular calcium mobilization and superoxide anion release. This response is mediated via a G-protein that activates a phosphatidylinositol-calcium second messenger system. Receptor for TAFA4, mediates its effects on chemoattracting macrophages, promoting phagocytosis and increasing ROS release. Receptor for cathepsin CTSG, leading to increased phagocyte chemotaxis. This chain is fMet-Leu-Phe receptor (FPR1), found in Macaca mulatta (Rhesus macaque).